Reading from the N-terminus, the 89-residue chain is MHRRVEWMTPTDDAILSLLGPPKQLELRSGDIARNTGYSRRRISDRCTVLVDRGLLFRDDEAGHPYYGLTDFGERYVAGELTVDNLEKA.

A DNA-binding region (H-T-H motif) is located at residues 29 to 52; the sequence is SGDIARNTGYSRRRISDRCTVLVD.

In terms of biological role, transcriptional repressor expressed under lysogenic conditions, which specifically binds the host DNA site 'RRGAAG'. The binding occurs cooperatively, probably as 2 copies of a dimer. Possibly prevents RNA polymerase access to the promoters for lytic cell cycle transcription. This Halobacterium salinarum (Halobacterium halobium) protein is Repressor protein (T6).